A 130-amino-acid chain; its full sequence is Large ribosomal subunit protein bL19c (130 aa).

The protein belongs to the bacterial ribosomal protein bL19 family.

It localises to the plastid. The protein localises to the chloroplast. The protein is Large ribosomal subunit protein bL19c (rpl19) of Chlorella vulgaris (Green alga).